Here is a 164-residue protein sequence, read N- to C-terminus: Large ribosomal subunit protein bL9 (164 aa).

Belongs to the bacterial ribosomal protein bL9 family.

Its function is as follows. Binds to the 23S rRNA. The sequence is that of Large ribosomal subunit protein bL9 from Borrelia duttonii (strain Ly).